A 469-amino-acid polypeptide reads, in one-letter code: uncharacterized protein (469 aa).

Disordered stretches follow at residues 248–314 (RDDN…EPES) and 327–418 (QMDQ…PRPT). Composition is skewed to polar residues over residues 292–305 (ESSNTRDQQTNAAS) and 350–365 (TARQPQVTPTRVPNTV). The segment covering 366–377 (TATSASTPASTS) has biased composition (low complexity).

This is an uncharacterized protein from Cryphonectria parasitica (Chestnut blight fungus).